A 1511-amino-acid chain; its full sequence is Bifunctional glutamate/proline--tRNA ligase (1511 aa).

The segment at 164–758 (GTKWDVSENK…SSVLYNRVAA (595 aa)) is glutamate--tRNA ligase. The short motif at 204–214 (PEASGYLHIGH) is the 'HIGH' region element. Residues 296–315 (AEQMKAEREQRAESKHRQNS) form a disordered region. Positions 299–315 (MKAEREQRAESKHRQNS) are enriched in basic and acidic residues. Lys300 carries the post-translational modification N6-acetyllysine; alternate. Lys300 is subject to N6-malonyllysine; alternate. Thr355 bears the Phosphothreonine mark. Lys417 carries the post-translational modification N6-acetyllysine. Residues 432–436 (VLSKR) carry the 'KMSKS' region motif. At Ser434 the chain carries Phosphoserine. N6-acetyllysine is present on residues Lys498, Lys535, Lys542, and Lys637. Residues 708–728 (KEMPTSGSKEKTKAEPLKKET) are compositionally biased toward basic and acidic residues. The segment at 708–741 (KEMPTSGSKEKTKAEPLKKETSSAPKEGPVPAVS) is disordered. Ser746 is subject to Phosphoserine. Residues 748–804 (ESSVLYNRVAAQGDVVRELKAKKAAKEDVDAAVKQLLALKAEYKQKTGQEYKPGNPP) form the WHEP-TRS 1 domain. A 3 X 57 AA approximate repeats region spans residues 759 to 955 (QGDVVRELKA…GIEYKPVSAT (197 aa)). Lys787 is modified (N6-acetyllysine). Residues 794–823 (TGQEYKPGNPPSAAAQSASTKSLPSAGEDR) are disordered. Polar residues predominate over residues 807 to 816 (AAQSASTKSL). The WHEP-TRS 2 domain maps to 821–877 (EDRSLYDKIAAQGEVVRKLKAEKAPKAKVTEAVECLLSLKAEYKEKTGKEYVPGQPP). N6-acetyllysine is present on Lys860. 2 disordered regions span residues 868–903 (GKEYVPGQPPASQKSQPSPASKAEPAGPETTEAKAL) and 952–1015 (VSAT…RLGL). Tyr871 carries the phosphotyrosine modification. A compositionally biased stretch (low complexity) spans 877–890 (PASQKSQPSPASKA). Position 885 is a phosphoserine; by CDK5 (Ser885). Position 897 is a phosphothreonine (Thr897). The WHEP-TRS 3 domain occupies 899–955 (EAKALFDRVACQGEVVRKLKAEKASKDQVDPAVQELLQLKAQYKSLTGIEYKPVSAT). Basic and acidic residues predominate over residues 957–975 (SEDKDKKKKEKENKSEKQN). Over residues 992-1005 (QGGGLSSSGAGEGQ) the composition is skewed to gly residues. Ser997 is modified (phosphoserine). Ser998 bears the Phosphoserine; by RPS6KB1 mark. Position 999 is a phosphoserine (Ser999). Residues 1006–1511 (GPKKQTRLGL…KFYTLFGRSY (506 aa)) form a proline--tRNA ligase region. L-proline contacts are provided by residues 1120–1122 (TSE) and Arg1151. ATP contacts are provided by Arg1151, Glu1153, Arg1162, Thr1163, Gln1236, and Thr1239. An Omega-N-methylarginine modification is found at Arg1151. Gln1236 contacts Mg(2+). His1241 provides a ligand contact to L-proline. ATP contacts are provided by Thr1275 and Arg1277. At Ser1349 the chain carries Phosphoserine. Positions 1447, 1452, 1494, and 1496 each coordinate Zn(2+). Residue Lys1502 is modified to N6-acetyllysine.

It in the N-terminal section; belongs to the class-I aminoacyl-tRNA synthetase family. Glutamate--tRNA ligase type 2 subfamily. The protein in the C-terminal section; belongs to the class-II aminoacyl-tRNA synthetase family. Homodimer. Part of the aminoacyl-tRNA synthetase multienzyme complex, also know as multisynthetase complex, that is composed of the tRNA ligases for Arg (RARS1), Asp (DARS1), Gln (QARS1), Ile (IARS1), Leu (LARS1), Lys (KARS1), Met (MARS1) the bifunctional ligase for Glu and Pro (EPRS1) and the auxiliary subunits AIMP1/p43, AIMP2/p38 and EEF1E1/p18. Forms a linear complex that contains MARS1, EEF1E1, EPRS1 and AIMP2 that is at the core of the multisubunit complex. Interacts with TARS3. Interacts with DUS2L. Component of the GAIT complex which is composed of EPRS1, RPL13A and GAPDH. Interacts (phosphorylated at Ser-998) with SLC27A1; mediates the translocation of SLC27A1 from the cytoplasm to the plasma membrane thereby increasing the uptake of long-chain fatty acids. In terms of processing, phosphorylated at Ser-998 by RPS6KB1; triggers EPRS1 release from the aminoacyl-tRNA synthetase multienzyme complex. In monocytes, the IFN-gamma-induced phosphorylation at Ser-998 releases EPRS1 from the aminoacyl-tRNA synthetase multienzyme complex, allowing its association with the GAIT complex. Phosphorylation at Ser-998 is specifically required for the RPL13A-mediated interaction of the GAIT complex with eIF4G. Phosphorylation at Ser-998 by RPS6KB1, is also induced by insulin through activation of the mTORC1 signaling pathway and promotes the interaction of EPRS1 with SLC27A1.

The protein resides in the cytoplasm. Its subcellular location is the cytosol. It localises to the membrane. It carries out the reaction tRNA(Glu) + L-glutamate + ATP = L-glutamyl-tRNA(Glu) + AMP + diphosphate. The enzyme catalyses tRNA(Pro) + L-proline + ATP = L-prolyl-tRNA(Pro) + AMP + diphosphate. In terms of biological role, multifunctional protein which primarily functions within the aminoacyl-tRNA synthetase multienzyme complex, also known as multisynthetase complex. Within the complex it catalyzes the attachment of both L-glutamate and L-proline to their cognate tRNAs in a two-step reaction where the amino acid is first activated by ATP to form a covalent intermediate with AMP. Subsequently, the activated amino acid is transferred to the acceptor end of the cognate tRNA to form L-glutamyl-tRNA(Glu) and L-prolyl-tRNA(Pro). Upon interferon-gamma stimulation, EPRS1 undergoes phosphorylation, causing its dissociation from the aminoacyl-tRNA synthetase multienzyme complex. It is recruited to form the GAIT complex, which binds to stem loop-containing GAIT elements found in the 3'-UTR of various inflammatory mRNAs, such as ceruloplasmin. The GAIT complex inhibits the translation of these mRNAs, allowing interferon-gamma to redirect the function of EPRS1 from protein synthesis to translation inhibition in specific cell contexts. Furthermore, it can function as a downstream effector in the mTORC1 signaling pathway, by promoting the translocation of SLC27A1 from the cytoplasm to the plasma membrane where it mediates the uptake of long-chain fatty acid by adipocytes. Thereby, EPRS1 also plays a role in fat metabolism and more indirectly influences lifespan. This is Bifunctional glutamate/proline--tRNA ligase from Cricetulus griseus (Chinese hamster).